The chain runs to 184 residues: Photosystem I assembly protein Ycf4 (184 aa).

2 helical membrane-spanning segments follow: residues 22–42 (FCWA…GTSS) and 57–77 (IIFF…LFIS).

Belongs to the Ycf4 family.

Its subcellular location is the plastid. It localises to the chloroplast thylakoid membrane. Seems to be required for the assembly of the photosystem I complex. In Capsella bursa-pastoris (Shepherd's purse), this protein is Photosystem I assembly protein Ycf4.